Reading from the N-terminus, the 175-residue chain is Adenine phosphoribosyltransferase (175 aa).

Belongs to the purine/pyrimidine phosphoribosyltransferase family. In terms of assembly, homodimer.

The protein resides in the cytoplasm. The enzyme catalyses AMP + diphosphate = 5-phospho-alpha-D-ribose 1-diphosphate + adenine. It participates in purine metabolism; AMP biosynthesis via salvage pathway; AMP from adenine: step 1/1. Its function is as follows. Catalyzes a salvage reaction resulting in the formation of AMP, that is energically less costly than de novo synthesis. This chain is Adenine phosphoribosyltransferase, found in Thermosipho melanesiensis (strain DSM 12029 / CIP 104789 / BI429).